The following is a 181-amino-acid chain: Large ribosomal subunit protein uL30 (181 aa).

The protein belongs to the universal ribosomal protein uL30 family. Part of the 50S ribosomal subunit.

This is Large ribosomal subunit protein uL30 from Hyperthermus butylicus (strain DSM 5456 / JCM 9403 / PLM1-5).